We begin with the raw amino-acid sequence, 103 residues long: Urease subunit gamma (103 aa).

It belongs to the urease gamma subunit family. In terms of assembly, heterotrimer of UreA (gamma), UreB (beta) and UreC (alpha) subunits. Three heterotrimers associate to form the active enzyme.

The protein resides in the cytoplasm. The enzyme catalyses urea + 2 H2O + H(+) = hydrogencarbonate + 2 NH4(+). It functions in the pathway nitrogen metabolism; urea degradation; CO(2) and NH(3) from urea (urease route): step 1/1. This is Urease subunit gamma from Paracoccus denitrificans (strain Pd 1222).